The sequence spans 186 residues: MGRDHTSKQHVRSGHRTAPKSDNVYLQLLVKLYSFLARRTDAPFNKVILKSLFLSKINRPPVSVSRISRALKQKGAAEKTIVVVGTVTDDNRLLEFPKATIAALRFTAGAKDRILKNGGEAITLDQLALRAPKGQNTLIVRGPRNSREAVRHFGFGPHKGKAPRILSKGRKFERARGRRRSRGFKV.

This sequence belongs to the eukaryotic ribosomal protein eL18 family. Component of the large ribosomal subunit. Mature ribosomes consist of a small (40S) and a large (60S) subunit. The 40S subunit contains about 32 different proteins and 1 molecule of RNA (18S). The 60S subunit contains 45 different proteins and 3 molecules of RNA (25S, 5.8S and 5S).

Its subcellular location is the cytoplasm. Functionally, component of the ribosome, a large ribonucleoprotein complex responsible for the synthesis of proteins in the cell. The small ribosomal subunit (SSU) binds messenger RNAs (mRNAs) and translates the encoded message by selecting cognate aminoacyl-transfer RNA (tRNA) molecules. The large subunit (LSU) contains the ribosomal catalytic site termed the peptidyl transferase center (PTC), which catalyzes the formation of peptide bonds, thereby polymerizing the amino acids delivered by tRNAs into a polypeptide chain. The nascent polypeptides leave the ribosome through a tunnel in the LSU and interact with protein factors that function in enzymatic processing, targeting, and the membrane insertion of nascent chains at the exit of the ribosomal tunnel. This Candida albicans (strain SC5314 / ATCC MYA-2876) (Yeast) protein is Large ribosomal subunit protein eL18.